The sequence spans 219 residues: Ribosomal RNA large subunit methyltransferase E (219 aa).

Gly60, Trp62, Asp80, Asp96, and Asp120 together coordinate S-adenosyl-L-methionine. The Proton acceptor role is filled by Lys160.

The protein belongs to the class I-like SAM-binding methyltransferase superfamily. RNA methyltransferase RlmE family.

The protein localises to the cytoplasm. The catalysed reaction is uridine(2552) in 23S rRNA + S-adenosyl-L-methionine = 2'-O-methyluridine(2552) in 23S rRNA + S-adenosyl-L-homocysteine + H(+). Its function is as follows. Specifically methylates the uridine in position 2552 of 23S rRNA at the 2'-O position of the ribose in the fully assembled 50S ribosomal subunit. This is Ribosomal RNA large subunit methyltransferase E from Acidithiobacillus ferrooxidans (strain ATCC 23270 / DSM 14882 / CIP 104768 / NCIMB 8455) (Ferrobacillus ferrooxidans (strain ATCC 23270)).